Here is a 348-residue protein sequence, read N- to C-terminus: Dihydroorotase (348 aa).

The Zn(2+) site is built by H17 and H19. Substrate is bound by residues 19–21 (HLR) and N45. Residues K103, H140, and H178 each contribute to the Zn(2+) site. The residue at position 103 (K103) is an N6-carboxylysine. Residue H140 participates in substrate binding. L223 is a binding site for substrate. D251 contacts Zn(2+). D251 is a catalytic residue. Substrate-binding residues include H255 and A267.

Belongs to the metallo-dependent hydrolases superfamily. DHOase family. Class II DHOase subfamily. In terms of assembly, homodimer. Requires Zn(2+) as cofactor.

The enzyme catalyses (S)-dihydroorotate + H2O = N-carbamoyl-L-aspartate + H(+). Its pathway is pyrimidine metabolism; UMP biosynthesis via de novo pathway; (S)-dihydroorotate from bicarbonate: step 3/3. Its function is as follows. Catalyzes the reversible cyclization of carbamoyl aspartate to dihydroorotate. The sequence is that of Dihydroorotase from Yersinia enterocolitica serotype O:8 / biotype 1B (strain NCTC 13174 / 8081).